The chain runs to 260 residues: 14-3-3 protein 3 (260 aa).

The protein belongs to the 14-3-3 family. Homodimer.

The protein is 14-3-3 protein 3 (TFT3) of Solanum lycopersicum (Tomato).